The primary structure comprises 226 residues: Gap junction beta-2 protein (226 aa).

Residues Met1 to Ile20 lie on the Cytoplasmic side of the membrane. Residues Gly21–Ala40 traverse the membrane as a helical segment. Over Lys41–Arg75 the chain is Extracellular. 3 disulfide bridges follow: Cys53-Cys180, Cys60-Cys174, and Cys64-Cys169. Residues Leu76–Tyr98 traverse the membrane as a helical segment. Over Arg99–Ser131 the chain is Cytoplasmic. Residues Leu132–Phe154 traverse the membrane as a helical segment. Topologically, residues Tyr155–Thr192 are extracellular. A helical transmembrane segment spans residues Val193–Ile215. The Cytoplasmic segment spans residues Arg216–Val226.

The protein belongs to the connexin family. As to quaternary structure, a connexon is composed of a hexamer of connexins. Interacts with CNST.

It localises to the cell membrane. It is found in the cell junction. Its subcellular location is the gap junction. Functionally, one gap junction consists of a cluster of closely packed pairs of transmembrane channels, the connexons, through which materials of low MW diffuse from one cell to a neighboring cell. The sequence is that of Gap junction beta-2 protein (GJB2) from Bos taurus (Bovine).